A 502-amino-acid chain; its full sequence is Zinc finger protein 488 (502 aa).

Residues 8–130 (RSLWTNDSKI…EGEELLVWYD (123 aa)) form the SET domain. Tyr-129 serves as a coordination point for S-adenosyl-L-methionine. The C2H2-type 1; atypical zinc-finger motif lies at 151–174 (YTCTRCGQAFKNENPFLAHCRFLC). 2 disordered regions span residues 267-303 (SEPTDNAQTNESKISKNSAFTEVRKAPEPSNPEKSSR) and 338-361 (PSKRALAEAQNPSPPDTDNSLDSF). Residues 269–286 (PTDNAQTNESKISKNSAF) show a composition bias toward polar residues. C2H2-type zinc fingers lie at residues 438 to 460 (NWCAKCNLSFRMTSDLVFHMRSH) and 479 to 501 (LTCPICHEYFRERHHLSRHMTSH).

This sequence belongs to the krueppel C2H2-type zinc-finger protein family. As to expression, expressed in pMN progenitors and oligodendrocyte lineage cells in the embryo with expression declining in oligodendrocytes undergoing differentiation.

The protein localises to the nucleus. In terms of biological role, transcriptional repressor. May have histone methyltransferase activity. Negatively regulates shh signaling activity in pMN progenitor cells which prevents their switch from motor neuron to oligodendrocyte precursor cell production. Independently of shh activity, also regulates oligodendrocyte formation. The polypeptide is Zinc finger protein 488 (Danio rerio (Zebrafish)).